Reading from the N-terminus, the 160-residue chain is Major pollen allergen Bet v 1-E (160 aa).

The brassinolide site is built by lysine 55, tyrosine 82, tyrosine 84, and asparagine 101.

This sequence belongs to the BetVI family.

It localises to the cytoplasm. May be a general steroid carrier protein. This Betula pendula (European white birch) protein is Major pollen allergen Bet v 1-E (BETV1E).